We begin with the raw amino-acid sequence, 469 residues long: Sulfate adenylyltransferase subunit 1 (469 aa).

The region spanning 22–237 (KEVLRFITCG…LEEVPVKSEE (216 aa)) is the tr-type G domain. A G1 region spans residues 31–38 (GSVDDGKS). 31 to 38 (GSVDDGKS) provides a ligand contact to GTP. A G2 region spans residues 89-93 (GITID). The G3 stretch occupies residues 110–113 (DTPG). GTP-binding positions include 110 to 114 (DTPGH) and 165 to 168 (NKMD). A G4 region spans residues 165–168 (NKMD). Residues 202–204 (SAK) are G5.

It belongs to the TRAFAC class translation factor GTPase superfamily. Classic translation factor GTPase family. CysN/NodQ subfamily. Heterodimer composed of CysD, the smaller subunit, and CysN.

It carries out the reaction sulfate + ATP + H(+) = adenosine 5'-phosphosulfate + diphosphate. It participates in sulfur metabolism; hydrogen sulfide biosynthesis; sulfite from sulfate: step 1/3. With CysD forms the ATP sulfurylase (ATPS) that catalyzes the adenylation of sulfate producing adenosine 5'-phosphosulfate (APS) and diphosphate, the first enzymatic step in sulfur assimilation pathway. APS synthesis involves the formation of a high-energy phosphoric-sulfuric acid anhydride bond driven by GTP hydrolysis by CysN coupled to ATP hydrolysis by CysD. The chain is Sulfate adenylyltransferase subunit 1 from Methylorubrum extorquens (strain CM4 / NCIMB 13688) (Methylobacterium extorquens).